A 541-amino-acid polypeptide reads, in one-letter code: GMP synthase [glutamine-hydrolyzing] (541 aa).

Residues 17–212 (TILVLDFGSQ…AVDICQSTTD (196 aa)) enclose the Glutamine amidotransferase type-1 domain. The active-site Nucleophile is the Cys-93. Residues His-186 and Glu-188 contribute to the active site. Residues 213-416 (WTMGKFVDQE…LGIPEDLVWR (204 aa)) form the GMPS ATP-PPase domain. 241-247 (SGGVDST) contacts ATP. Residues Arg-315, Asp-478, Lys-533, and Glu-539 each contribute to the XMP site.

Homodimer. Requires Mg(2+) as cofactor.

The protein localises to the cytoplasm. The protein resides in the cytosol. It carries out the reaction XMP + L-glutamine + ATP + H2O = GMP + L-glutamate + AMP + diphosphate + 2 H(+). Its pathway is purine metabolism; GMP biosynthesis; GMP from XMP (L-Gln route): step 1/1. Its function is as follows. Catalyzes the conversion of xanthine monophosphate (XMP) to GMP in the presence of glutamine and ATP through an adenyl-XMP intermediate. This Phaeosphaeria nodorum (strain SN15 / ATCC MYA-4574 / FGSC 10173) (Glume blotch fungus) protein is GMP synthase [glutamine-hydrolyzing] (GUA1).